Reading from the N-terminus, the 780-residue chain is Reticulon-1 (780 aa).

4 disordered regions span residues 1-76, 128-176, 201-223, and 293-576; these read MAAP…VAME, QKEN…AEST, RPQEAKGQEEQHPGLEDKDLDFK, and MTAT…IPGP. Phosphoserine occurs at positions 13 and 70. Ser-327 is modified (phosphoserine). The segment covering 328 to 341 has biased composition (low complexity); that stretch reads PGSVTPPSSGTEPS. Phosphoserine occurs at positions 350, 352, and 487. Over residues 497-512 the composition is skewed to basic and acidic residues; it reads AIREETGSRATEERAP. Residues 593–780 enclose the Reticulon domain; it reads AIDLLYWRDI…KIPGAKRHAE (188 aa). The next 2 helical transmembrane spans lie at 607-627 and 709-729; these read IVFGSFLLLLFSLTQFSVVSV and FAVLMWLLTYVGALFNGLTLL.

As to quaternary structure, interacts with NDRG1. Interacts with BACE1. Interacts with TMEM33.

Its subcellular location is the endoplasmic reticulum membrane. The protein resides in the golgi apparatus membrane. Inhibits amyloid precursor protein processing, probably by blocking BACE1 activity. This is Reticulon-1 (Rtn1) from Mus musculus (Mouse).